Consider the following 76-residue polypeptide: Esculentin-2MT2 (76 aa).

The first 22 residues, 1-22 (MFTLKKSMLLLFFLGTISLSLC), serve as a signal peptide directing secretion. Residues 23–37 (EEERSADEDDGEKEV) constitute a propeptide, removed in mature form. Cys-70 and Cys-76 form a disulfide bridge.

The protein belongs to the frog skin active peptide (FSAP) family. Esculentin subfamily. As to expression, expressed by the skin glands.

It is found in the secreted. Its function is as follows. Antimicrobial peptide. Active against a variety of Gram-negative and Gram-positive bacterial strains. Active against fungi. Shows strong hemolytic activity against human erythrocytes. The polypeptide is Esculentin-2MT2 (Amolops mantzorum (Sichuan torrent frog)).